Consider the following 167-residue polypeptide: uncharacterized protein (167 aa).

The next 4 membrane-spanning stretches (helical) occupy residues 13-33, 37-57, 61-81, and 103-123; these read LIYLFIWGLIISGLSDLTWLI, VLAVSLFFISLQFSQKSFLPY, WFALVIFIVLMWATLSWKIGE, and LLLISLWLFLWNINDAVLVPS.

Its subcellular location is the cell membrane. This is an uncharacterized protein from Haemophilus influenzae (strain ATCC 51907 / DSM 11121 / KW20 / Rd).